The chain runs to 72 residues: LITAF domain-containing protein (72 aa).

In terms of domain architecture, LITAF spans 1–71 (MPVQAVCPYC…CQRELFYYHR (71 aa)). Zn(2+) contacts are provided by Cys-7 and Cys-10. A membrane-binding amphipathic helix region spans residues 22 to 45 (PGALTWLLCTTLFLFGYVLGCCFL). Zn(2+) contacts are provided by Cys-59 and Cys-62.

It belongs to the CDIP1/LITAF family.

It is found in the membrane. This is LITAF domain-containing protein from Homo sapiens (Human).